The primary structure comprises 227 residues: MPIKAILTDIEGTTSAVSFVFDVLFPFAKKHLPGFVRQNAGQPAVASQLQAVRTEAGEPDADVERVIAILLEWIAEDRKATPLKALQGMVWEQGYNAGQLKGHVYPDAVDALKHWHQQGYRLYVYSSGSIQAQQLIFGCSEAGDLSGLFSGYFDTTSGPKREAQSYRTIAQAIECPAENILFLSDIVEELDAAQAAGMITCGLARDGGVLVGHRYVSSFALIDPASF.

It belongs to the HAD-like hydrolase superfamily. MasA/MtnC family. In terms of assembly, monomer. It depends on Mg(2+) as a cofactor.

The enzyme catalyses 5-methylsulfanyl-2,3-dioxopentyl phosphate + H2O = 1,2-dihydroxy-5-(methylsulfanyl)pent-1-en-3-one + phosphate. Its pathway is amino-acid biosynthesis; L-methionine biosynthesis via salvage pathway; L-methionine from S-methyl-5-thio-alpha-D-ribose 1-phosphate: step 3/6. It functions in the pathway amino-acid biosynthesis; L-methionine biosynthesis via salvage pathway; L-methionine from S-methyl-5-thio-alpha-D-ribose 1-phosphate: step 4/6. In terms of biological role, bifunctional enzyme that catalyzes the enolization of 2,3-diketo-5-methylthiopentyl-1-phosphate (DK-MTP-1-P) into the intermediate 2-hydroxy-3-keto-5-methylthiopentenyl-1-phosphate (HK-MTPenyl-1-P), which is then dephosphorylated to form the acireductone 1,2-dihydroxy-3-keto-5-methylthiopentene (DHK-MTPene). The protein is Enolase-phosphatase E1 of Pseudomonas savastanoi pv. phaseolicola (strain 1448A / Race 6) (Pseudomonas syringae pv. phaseolicola (strain 1448A / Race 6)).